Reading from the N-terminus, the 75-residue chain is Tautomerase PptA (75 aa).

Proline 2 serves as the catalytic Proton acceptor; via imino nitrogen.

Belongs to the 4-oxalocrotonate tautomerase family. PptA subfamily. In terms of assembly, homodimer.

Its subcellular location is the cytoplasm. This is Tautomerase PptA from Shigella sonnei (strain Ss046).